Consider the following 316-residue polypeptide: Phospho-N-acetylmuramoyl-pentapeptide-transferase (316 aa).

10 helical membrane-spanning segments follow: residues 5 to 25 (IILATVVAFVLSLASGPLFIP), 49 to 69 (GTPTMGGIMFITATVISTLIF), 76 to 96 (LAILLLGFLGYGLIGFADDFL), 116 to 136 (FLLAIIISYFAQEYVGTEVIF), 141 to 161 (TTIDLGNFYIPFIVFVIVGTV), 172 to 192 (GLAAGVSFIVMAFFTMTALFL), 195 to 212 (ITYGAFSAALTGGLLGFL), 221 to 241 (IFMGDTGSLAIGGAIATAAVL), 244 to 264 (LPLILPLIGIIYVAEAFSVII), and 296 to 316 (VVYAFWIVTLIAMFLSFYSLS).

Belongs to the glycosyltransferase 4 family. MraY subfamily. Mg(2+) serves as cofactor.

It localises to the cell membrane. It carries out the reaction UDP-N-acetyl-alpha-D-muramoyl-L-alanyl-gamma-D-glutamyl-meso-2,6-diaminopimeloyl-D-alanyl-D-alanine + di-trans,octa-cis-undecaprenyl phosphate = di-trans,octa-cis-undecaprenyl diphospho-N-acetyl-alpha-D-muramoyl-L-alanyl-D-glutamyl-meso-2,6-diaminopimeloyl-D-alanyl-D-alanine + UMP. The protein operates within cell wall biogenesis; peptidoglycan biosynthesis. In terms of biological role, catalyzes the initial step of the lipid cycle reactions in the biosynthesis of the cell wall peptidoglycan: transfers peptidoglycan precursor phospho-MurNAc-pentapeptide from UDP-MurNAc-pentapeptide onto the lipid carrier undecaprenyl phosphate, yielding undecaprenyl-pyrophosphoryl-MurNAc-pentapeptide, known as lipid I. The chain is Phospho-N-acetylmuramoyl-pentapeptide-transferase from Thermoanaerobacter pseudethanolicus (strain ATCC 33223 / 39E) (Clostridium thermohydrosulfuricum).